We begin with the raw amino-acid sequence, 111 residues long: Probable 4-amino-4-deoxy-L-arabinose-phosphoundecaprenol flippase subunit ArnE (111 aa).

The Cytoplasmic segment spans residues 1–37 (MIWLVLILASLLSVTGQLCQKQATRPVAINKRRKHIA). A helical transmembrane segment spans residues 38-58 (LWLGLGLVCLGLAMVLWLLVL). The EamA domain occupies 40–109 (LGLGLVCLGL…IIGGIVILGS (70 aa)). Over 59-60 (QT) the chain is Periplasmic. A helical membrane pass occupies residues 61 to 81 (VPVGIAYPMLSLNFVWVTLAA). Residues 82-87 (TKLWHE) are Cytoplasmic-facing. A helical transmembrane segment spans residues 88–108 (PVSFRHWCGVAFIIGGIVILG). The Periplasmic portion of the chain corresponds to 109 to 111 (STV).

This sequence belongs to the ArnE family. In terms of assembly, heterodimer of ArnE and ArnF.

The protein localises to the cell inner membrane. It functions in the pathway bacterial outer membrane biogenesis; lipopolysaccharide biosynthesis. Its function is as follows. Translocates 4-amino-4-deoxy-L-arabinose-phosphoundecaprenol (alpha-L-Ara4N-phosphoundecaprenol) from the cytoplasmic to the periplasmic side of the inner membrane. The sequence is that of Probable 4-amino-4-deoxy-L-arabinose-phosphoundecaprenol flippase subunit ArnE from Escherichia fergusonii (strain ATCC 35469 / DSM 13698 / CCUG 18766 / IAM 14443 / JCM 21226 / LMG 7866 / NBRC 102419 / NCTC 12128 / CDC 0568-73).